The primary structure comprises 89 residues: Small ribosomal subunit protein uS15 (89 aa).

The protein belongs to the universal ribosomal protein uS15 family. In terms of assembly, part of the 30S ribosomal subunit. Forms a bridge to the 50S subunit in the 70S ribosome, contacting the 23S rRNA.

Functionally, one of the primary rRNA binding proteins, it binds directly to 16S rRNA where it helps nucleate assembly of the platform of the 30S subunit by binding and bridging several RNA helices of the 16S rRNA. In terms of biological role, forms an intersubunit bridge (bridge B4) with the 23S rRNA of the 50S subunit in the ribosome. The protein is Small ribosomal subunit protein uS15 of Bradyrhizobium sp. (strain ORS 278).